The chain runs to 96 residues: C-C motif chemokine 20 (96 aa).

A signal peptide spans 1-26; that stretch reads MACKHLPFLALAGVLLAYLCSQSEAA. 2 disulfide bridges follow: Cys-31–Cys-58 and Cys-32–Cys-74.

This sequence belongs to the intercrine beta (chemokine CC) family. Low levels in thymus and lung.

The protein resides in the secreted. Its function is as follows. Acts as a ligand for C-C chemokine receptor CCR6. Signals through binding and activation of CCR6 and induces a strong chemotactic response and mobilization of intracellular calcium ions. The ligand-receptor pair CCL20-CCR6 is responsible for the chemotaxis of dendritic cells (DC), effector/memory T-cells and B-cells and plays an important role at skin and mucosal surfaces under homeostatic and inflammatory conditions, as well as in pathology, including cancer and autoimmune diseases. CCL20 acts as a chemotactic factor that attracts lymphocytes and, slightly, neutrophils, but not monocytes. Involved in the recruitment of both the pro-inflammatory IL17 producing helper T-cells (Th17) and the regulatory T-cells (Treg) to sites of inflammation. Required for optimal migration of thymic natural regulatory T cells (nTregs) and DN1 early thymocyte progenitor cells. Positively regulates sperm motility and chemotaxis via its binding to CCR6 which triggers Ca2+ mobilization in the sperm which is important for its motility. May be involved in formation and function of the mucosal lymphoid tissues by attracting lymphocytes and dendritic cells towards epithelial cells. This chain is C-C motif chemokine 20 (Ccl20), found in Rattus norvegicus (Rat).